Reading from the N-terminus, the 404-residue chain is Histidinol dehydrogenase (404 aa).

3 residues coordinate NAD(+): tyrosine 114, glutamine 176, and asparagine 199. Substrate is bound by residues serine 222, glutamine 244, and histidine 247. Glutamine 244 and histidine 247 together coordinate Zn(2+). Active-site proton acceptor residues include glutamate 300 and histidine 301. Substrate contacts are provided by histidine 301, aspartate 334, glutamate 388, and histidine 393. Position 334 (aspartate 334) interacts with Zn(2+). Histidine 393 contributes to the Zn(2+) binding site.

It belongs to the histidinol dehydrogenase family. Zn(2+) is required as a cofactor.

The enzyme catalyses L-histidinol + 2 NAD(+) + H2O = L-histidine + 2 NADH + 3 H(+). It functions in the pathway amino-acid biosynthesis; L-histidine biosynthesis; L-histidine from 5-phospho-alpha-D-ribose 1-diphosphate: step 9/9. In terms of biological role, catalyzes the sequential NAD-dependent oxidations of L-histidinol to L-histidinaldehyde and then to L-histidine. The chain is Histidinol dehydrogenase (hisD) from Archaeoglobus fulgidus (strain ATCC 49558 / DSM 4304 / JCM 9628 / NBRC 100126 / VC-16).